Reading from the N-terminus, the 220-residue chain is N-(5'-phosphoribosyl)anthranilate isomerase (220 aa).

The protein belongs to the TrpF family.

It carries out the reaction N-(5-phospho-beta-D-ribosyl)anthranilate = 1-(2-carboxyphenylamino)-1-deoxy-D-ribulose 5-phosphate. It functions in the pathway amino-acid biosynthesis; L-tryptophan biosynthesis; L-tryptophan from chorismate: step 3/5. The polypeptide is N-(5'-phosphoribosyl)anthranilate isomerase (Leptothrix cholodnii (strain ATCC 51168 / LMG 8142 / SP-6) (Leptothrix discophora (strain SP-6))).